The sequence spans 377 residues: tRNA(Met) cytidine acetate ligase (377 aa).

ATP is bound by residues 7-20 (ITEYNPFHNGHLFH), Gly100, Asn153, and Arg178.

It belongs to the TmcAL family.

It localises to the cytoplasm. It catalyses the reaction cytidine(34) in elongator tRNA(Met) + acetate + ATP = N(4)-acetylcytidine(34) in elongator tRNA(Met) + AMP + diphosphate. Its function is as follows. Catalyzes the formation of N(4)-acetylcytidine (ac(4)C) at the wobble position of elongator tRNA(Met), using acetate and ATP as substrates. First activates an acetate ion to form acetyladenylate (Ac-AMP) and then transfers the acetyl group to tRNA to form ac(4)C34. The polypeptide is tRNA(Met) cytidine acetate ligase (Staphylococcus epidermidis (strain ATCC 35984 / DSM 28319 / BCRC 17069 / CCUG 31568 / BM 3577 / RP62A)).